We begin with the raw amino-acid sequence, 318 residues long: UDP-3-O-acylglucosamine N-acyltransferase (318 aa).

His230 acts as the Proton acceptor in catalysis.

It belongs to the transferase hexapeptide repeat family. LpxD subfamily. As to quaternary structure, homotrimer.

It catalyses the reaction a UDP-3-O-[(3R)-3-hydroxyacyl]-alpha-D-glucosamine + a (3R)-hydroxyacyl-[ACP] = a UDP-2-N,3-O-bis[(3R)-3-hydroxyacyl]-alpha-D-glucosamine + holo-[ACP] + H(+). It participates in bacterial outer membrane biogenesis; LPS lipid A biosynthesis. Catalyzes the N-acylation of UDP-3-O-acylglucosamine using 3-hydroxyacyl-ACP as the acyl donor. Is involved in the biosynthesis of lipid A, a phosphorylated glycolipid that anchors the lipopolysaccharide to the outer membrane of the cell. This is UDP-3-O-acylglucosamine N-acyltransferase from Wolinella succinogenes (strain ATCC 29543 / DSM 1740 / CCUG 13145 / JCM 31913 / LMG 7466 / NCTC 11488 / FDC 602W) (Vibrio succinogenes).